Reading from the N-terminus, the 143-residue chain is Large ribosomal subunit protein uL11 (143 aa).

It belongs to the universal ribosomal protein uL11 family. As to quaternary structure, part of the ribosomal stalk of the 50S ribosomal subunit. Interacts with L10 and the large rRNA to form the base of the stalk. L10 forms an elongated spine to which L12 dimers bind in a sequential fashion forming a multimeric L10(L12)X complex. Post-translationally, one or more lysine residues are methylated.

Its function is as follows. Forms part of the ribosomal stalk which helps the ribosome interact with GTP-bound translation factors. The protein is Large ribosomal subunit protein uL11 of Stutzerimonas stutzeri (strain A1501) (Pseudomonas stutzeri).